We begin with the raw amino-acid sequence, 439 residues long: tRNA-2-methylthio-N(6)-dimethylallyladenosine synthase (439 aa).

Residues 2-116 (LKVYIETMGC…ISQVIHKEKA (115 aa)) form the MTTase N-terminal domain. [4Fe-4S] cluster contacts are provided by Cys-11, Cys-47, Cys-79, Cys-149, Cys-153, and Cys-156. Residues 135–368 (KKAEVRSLLN…QNRHKEILEE (234 aa)) enclose the Radical SAM core domain. Residues 371–437 (RLEVGKTHVV…KGRLMATTKN (67 aa)) enclose the TRAM domain.

The protein belongs to the methylthiotransferase family. MiaB subfamily. As to quaternary structure, monomer. It depends on [4Fe-4S] cluster as a cofactor.

It localises to the cytoplasm. It catalyses the reaction N(6)-dimethylallyladenosine(37) in tRNA + (sulfur carrier)-SH + AH2 + 2 S-adenosyl-L-methionine = 2-methylsulfanyl-N(6)-dimethylallyladenosine(37) in tRNA + (sulfur carrier)-H + 5'-deoxyadenosine + L-methionine + A + S-adenosyl-L-homocysteine + 2 H(+). Catalyzes the methylthiolation of N6-(dimethylallyl)adenosine (i(6)A), leading to the formation of 2-methylthio-N6-(dimethylallyl)adenosine (ms(2)i(6)A) at position 37 in tRNAs that read codons beginning with uridine. The sequence is that of tRNA-2-methylthio-N(6)-dimethylallyladenosine synthase from Helicobacter acinonychis (strain Sheeba).